A 311-amino-acid chain; its full sequence is MEEKNLVKVQVPGTSANLGAGFDSMGIALNIYNYVSLRQLEPGSGVIIEVKGEGADFISRDKDNLVYQAIAGVYREIYGSDVLIPDLEITLENNIPLARGLGSSAAAIVGGAVAANEMFNGELTRDELLKHVLELEGHLDNIAPAMYGGLTCSLITRENELMFRTVDVVEDWNFIIIVPGQELSTQKAREALPERIAFQDGLFNLSRANMLILAFQQRDYELLWHSMDDELHEPYRAKLIPGLDRLLQEVRGAGIPAAISGAGPSIACVLSEIEEEKIVRELGKEKFSAHGIESNFFKLKPDNSGAKSILH.

An ATP-binding site is contributed by 96–106 (PLARGLGSSAA).

This sequence belongs to the GHMP kinase family. Homoserine kinase subfamily.

It is found in the cytoplasm. The catalysed reaction is L-homoserine + ATP = O-phospho-L-homoserine + ADP + H(+). It participates in amino-acid biosynthesis; L-threonine biosynthesis; L-threonine from L-aspartate: step 4/5. Functionally, catalyzes the ATP-dependent phosphorylation of L-homoserine to L-homoserine phosphate. This Natranaerobius thermophilus (strain ATCC BAA-1301 / DSM 18059 / JW/NM-WN-LF) protein is Homoserine kinase.